A 29-amino-acid chain; its full sequence is Cytochrome b6-f complex subunit 8 (29 aa).

Residues 3–23 traverse the membrane as a helical segment; sequence IISIGWVSLMVVFTFSISLVV.

This sequence belongs to the PetN family. As to quaternary structure, the 4 large subunits of the cytochrome b6-f complex are cytochrome b6, subunit IV (17 kDa polypeptide, PetD), cytochrome f and the Rieske protein, while the 4 small subunits are PetG, PetL, PetM and PetN. The complex functions as a dimer.

It localises to the plastid. The protein localises to the chloroplast thylakoid membrane. In terms of biological role, component of the cytochrome b6-f complex, which mediates electron transfer between photosystem II (PSII) and photosystem I (PSI), cyclic electron flow around PSI, and state transitions. This Staurastrum punctulatum (Green alga) protein is Cytochrome b6-f complex subunit 8.